A 309-amino-acid polypeptide reads, in one-letter code: Aspartate carbamoyltransferase catalytic subunit (309 aa).

Carbamoyl phosphate is bound by residues R57 and T58. K86 provides a ligand contact to L-aspartate. Positions 107, 135, and 138 each coordinate carbamoyl phosphate. R168 and R228 together coordinate L-aspartate. The carbamoyl phosphate site is built by L267 and P268.

Belongs to the aspartate/ornithine carbamoyltransferase superfamily. ATCase family. In terms of assembly, heterooligomer of catalytic and regulatory chains.

It carries out the reaction carbamoyl phosphate + L-aspartate = N-carbamoyl-L-aspartate + phosphate + H(+). Its pathway is pyrimidine metabolism; UMP biosynthesis via de novo pathway; (S)-dihydroorotate from bicarbonate: step 2/3. Catalyzes the condensation of carbamoyl phosphate and aspartate to form carbamoyl aspartate and inorganic phosphate, the committed step in the de novo pyrimidine nucleotide biosynthesis pathway. In Cenarchaeum symbiosum (strain A), this protein is Aspartate carbamoyltransferase catalytic subunit.